The chain runs to 255 residues: 4-hydroxy-tetrahydrodipicolinate reductase (255 aa).

Residues 9-14, 89-91, and 115-118 contribute to the NAD(+) site; these read GFKGKM, GTT, and APNF. Catalysis depends on histidine 145, which acts as the Proton donor/acceptor. (S)-2,3,4,5-tetrahydrodipicolinate is bound at residue histidine 146. Residue lysine 149 is the Proton donor of the active site. A (S)-2,3,4,5-tetrahydrodipicolinate-binding site is contributed by 155–156; the sequence is GT.

It belongs to the DapB family.

It localises to the cytoplasm. The catalysed reaction is (S)-2,3,4,5-tetrahydrodipicolinate + NAD(+) + H2O = (2S,4S)-4-hydroxy-2,3,4,5-tetrahydrodipicolinate + NADH + H(+). It carries out the reaction (S)-2,3,4,5-tetrahydrodipicolinate + NADP(+) + H2O = (2S,4S)-4-hydroxy-2,3,4,5-tetrahydrodipicolinate + NADPH + H(+). The protein operates within amino-acid biosynthesis; L-lysine biosynthesis via DAP pathway; (S)-tetrahydrodipicolinate from L-aspartate: step 4/4. In terms of biological role, catalyzes the conversion of 4-hydroxy-tetrahydrodipicolinate (HTPA) to tetrahydrodipicolinate. The protein is 4-hydroxy-tetrahydrodipicolinate reductase of Streptococcus suis (strain 98HAH33).